Consider the following 132-residue polypeptide: Small ribosomal subunit protein uS8 (132 aa).

The protein belongs to the universal ribosomal protein uS8 family. As to quaternary structure, part of the 30S ribosomal subunit. Contacts proteins S5 and S12.

One of the primary rRNA binding proteins, it binds directly to 16S rRNA central domain where it helps coordinate assembly of the platform of the 30S subunit. The chain is Small ribosomal subunit protein uS8 from Halalkalibacterium halodurans (strain ATCC BAA-125 / DSM 18197 / FERM 7344 / JCM 9153 / C-125) (Bacillus halodurans).